A 58-amino-acid chain; its full sequence is Ribosome biogenesis protein Nop10 (58 aa).

This sequence belongs to the NOP10 family.

Involved in ribosome biogenesis; more specifically in 18S rRNA pseudouridylation and in cleavage of pre-rRNA. This is Ribosome biogenesis protein Nop10 from Methanobrevibacter smithii (strain ATCC 35061 / DSM 861 / OCM 144 / PS).